Consider the following 216-residue polypeptide: Adenylate kinase (216 aa).

Residue 10 to 15 (GAGKGT) participates in ATP binding. The segment at 30-59 (STGDMLRAAVNAGTEVGKRAKAVMDAGKLV) is NMP. AMP is bound by residues Thr31, Arg36, 57-59 (KLV), 85-88 (GFPR), and Gln92. The LID stretch occupies residues 126–163 (GRYTCAQCGTVYHDTDKVPVEEGVCDKCGSTHFKRRPD). Position 127 (Arg127) interacts with ATP. Zn(2+)-binding residues include Cys130 and Cys133. Residue 136 to 137 (VY) coordinates ATP. Positions 150 and 153 each coordinate Zn(2+). The AMP site is built by Arg160 and Arg172. Residue Ala200 participates in ATP binding.

This sequence belongs to the adenylate kinase family. Monomer.

The protein localises to the cytoplasm. It catalyses the reaction AMP + ATP = 2 ADP. Its pathway is purine metabolism; AMP biosynthesis via salvage pathway; AMP from ADP: step 1/1. Its function is as follows. Catalyzes the reversible transfer of the terminal phosphate group between ATP and AMP. Plays an important role in cellular energy homeostasis and in adenine nucleotide metabolism. The chain is Adenylate kinase from Rhizobium etli (strain ATCC 51251 / DSM 11541 / JCM 21823 / NBRC 15573 / CFN 42).